A 363-amino-acid chain; its full sequence is S-adenosylmethionine:tRNA ribosyltransferase-isomerase (363 aa).

The protein belongs to the QueA family. In terms of assembly, monomer.

It localises to the cytoplasm. It catalyses the reaction 7-aminomethyl-7-carbaguanosine(34) in tRNA + S-adenosyl-L-methionine = epoxyqueuosine(34) in tRNA + adenine + L-methionine + 2 H(+). It functions in the pathway tRNA modification; tRNA-queuosine biosynthesis. In terms of biological role, transfers and isomerizes the ribose moiety from AdoMet to the 7-aminomethyl group of 7-deazaguanine (preQ1-tRNA) to give epoxyqueuosine (oQ-tRNA). The protein is S-adenosylmethionine:tRNA ribosyltransferase-isomerase of Synechococcus sp. (strain RCC307).